The sequence spans 408 residues: Retron Ec48 reverse transcriptase (408 aa).

In terms of domain architecture, Reverse transcriptase spans 43 to 269; it reads EELKAIAELP…EPIKVHGLRV (227 aa). Mg(2+)-binding residues include aspartate 137, aspartate 216, and aspartate 217.

Belongs to the bacterial reverse transcriptase family.

The catalysed reaction is DNA(n) + a 2'-deoxyribonucleoside 5'-triphosphate = DNA(n+1) + diphosphate. Functionally, reverse transcriptase (RT) component of antiviral defense system retron Ec48, composed of a non-coding RNA (ncRNA), this reverse transcriptase (RT) and the following membrane protein. Expression of this retron confers protection against bacteriophages lambda, T2, T4, T5 and T7. At multiplicity of infection (MOI) of 0.02 cultures grow normally when infected with lambda without collapsing, at MOI 2 cultures enter growth stasis. At MOI 3 cell membranes are permeabilized within 15 minutes of infection but do not lyse, suggesting the phage are not able to finish a replication cycle. Antiviral defense is suppressed by mutations that knockout the lambda gam expression or phage T7 gp5.9 expression; both viral genes inhibit host RecBCD. The Ec48 retron may sense the integrity of the RecBCD enzyme; when RecBCD is perturbed by viral proteins the Ec48 effector (the membrane protein) is activated, leading to abortive infection and bacterial growth arrest. Responsible for synthesis of msDNA-Ec48 (a branched molecule with RNA linked by a 2',5'-phosphodiester bond to ssDNA). The retron transcript serves as primer (from a conserved internal G residue) and template for the reaction, and codes for the RT. This Escherichia coli protein is Retron Ec48 reverse transcriptase.